Here is a 201-residue protein sequence, read N- to C-terminus: Thymidylate kinase (201 aa).

7–14 (GIDGSGKS) contacts ATP.

This sequence belongs to the thymidylate kinase family.

It carries out the reaction dTMP + ATP = dTDP + ADP. Functionally, phosphorylation of dTMP to form dTDP in both de novo and salvage pathways of dTTP synthesis. The polypeptide is Thymidylate kinase (Thermosipho africanus (strain TCF52B)).